Consider the following 441-residue polypeptide: Interferon-related developmental regulator 2 (441 aa).

Basic residues predominate over residues 1 to 15; that stretch reads MPRARKGNALRKGGQ. Residues 1 to 51 form a disordered region; it reads MPRARKGNALRKGGQRRGGGARSSTQADSGSSEDEAASEARSTTSDCPSLL.

This sequence belongs to the IFRD family. As to quaternary structure, associates with ribosomes; promoting ribosome inactivation.

In terms of biological role, ribosome-binding protein that acts as an inhibitor of mRNA translation by promoting ribosome inactivation. Associates with the P- and E-sites of the ribosome and inserts a C-terminal helix into the mRNA exit channel to preclude translation. The polypeptide is Interferon-related developmental regulator 2 (Mus musculus (Mouse)).